Here is a 498-residue protein sequence, read N- to C-terminus: Myocyte-specific enhancer factor 2A (498 aa).

Positions 3 to 57 constitute an MADS-box domain; sequence RKKIQITRIMDERNRQVTFTKRKFGLMKKAYELSVLCDCEIALIIFNSSNKLFQY. Residues 58 to 86 constitute a DNA-binding region (mef2-type); sequence ASTDMDKVLLKYTEYNEPHESRTNSDIVE. Residue Ser59 is modified to Phosphoserine; by CK2. Phosphoserine occurs at positions 98 and 108. A Phosphothreonine modification is found at Ser108. The segment at 172–220 is disordered; it reads LADSSMLSPPPATLHRNVSPGAPQRPPSTGSASGMLSTTDLTVPNGAGN. Over residues 198 to 220 the composition is skewed to polar residues; it reads PSTGSASGMLSTTDLTVPNGAGN. Residue Ser233 is modified to Phosphoserine. The segment at 240 to 268 is disordered; sequence TGANSLGKVMPTKSPPPPGGGSLGMNSRK. Lys247 carries the N6-acetyllysine modification. Ser253 is subject to Phosphoserine. Residues 264–281 are required for interaction with MAPKs; sequence MNSRKPDLRVVIPPSSKG. The interval 287-294 is beta domain; the sequence is SEEEELEL. Phosphothreonine; by MAPK7 is present on residues Thr310 and Thr317. Position 310 is a phosphothreonine; by NLK (Thr310). Ser353 bears the Phosphoserine; by MAPK7 mark. Residues 388–400 are compositionally biased toward polar residues; it reads SNLSINTNQNINI. The disordered stretch occupies residues 388–498; sequence SNLSINTNQN…KRMRMDTWVT (111 aa). The residue at position 401 (Lys401) is an N6-acetyllysine; alternate. Lys401 participates in a covalent cross-link: Glycyl lysine isopeptide (Lys-Gly) (interchain with G-Cter in SUMO); alternate. Phosphoserine is present on Ser406. Thr413 is modified (phosphothreonine). Pro residues predominate over residues 426-436; that stretch reads QQPPPQPPQPQ. Residue Ser444 is modified to Phosphoserine. Low complexity predominate over residues 444-457; sequence SPVDSLSSSSSSYD. Composition is skewed to basic and acidic residues over residues 458–468 and 479–498; these read GSDREDPRGDF and NTED…TWVT.

This sequence belongs to the MEF2 family. As to quaternary structure, binds DNA as a homo- or heterodimer. Dimerizes with MEF2D. Interacts with HDAC7. Interacts with PIAS1; the interaction enhances sumoylation. Interacts with HDAC4, HDAC9 and SLC2A4RG. Interacts (via the N-terminal) with MAPK7; the interaction results in the phosphorylation and transcriptional activity of MEF2A. Post-translationally, constitutive phosphorylation on Ser-406 promotes Lys-401 sumoylation thus preventing acetylation at this site. Dephosphorylation on Ser-406 by PPP3CA upon neuron depolarization promotes a switch from sumoylation to acetylation on residue Lys-403 leading to inhibition of dendrite claw differentiation. Phosphorylation on Thr-312 and Thr-319 are the main sites involved in p38 MAPK signaling and activate transcription. Phosphorylated on these sites by MAPK14/p38alpha and MAPK11/p38beta, but not by MAPK13/p38delta nor by MAPK12/p38gamma. Phosphorylation on Ser-408 by CDK5 induced by neurotoxicity inhibits MEF2A transcriptional activation leading to apoptosis of cortical neurons. Phosphorylation on Thr-312, Thr-319 and Ser-355 can be induced by EGF. Isoform 3 is phosphorylated on Ser-98 and Thr-108. In terms of processing, sumoylation on Lys-401 is enhanced by PIAS1 and represses transcriptional activity. Phosphorylation on Ser-406 is required for sumoylation. Has no effect on nuclear location nor on DNA binding. Sumoylated with SUMO1 and, to a lesser extent with SUMO2 and SUMO3. PIASx facilitates sumoylation in postsynaptic dendrites in the cerebellar cortex and promotes their morphogenesis. Acetylation on Lys-401 activates transcriptional activity. Acetylated by p300 on several sites in diffentiating myocytes. Acetylation on Lys-4 increases DNA binding and transactivation. Hyperacetylation by p300 leads to enhanced cardiac myocyte growth and heart failure. Post-translationally, proteolytically cleaved in cerebellar granule neurons on several sites by caspase 3 and caspase 7 following neurotoxicity. Preferentially cleaves the CDK5-mediated hyperphosphorylated form which leads to neuron apoptosis and transcriptional inactivation. Widely expressed though mainly restricted to skeletal and cardiac muscle, brain, neurons and lymphocytes. Differentially expressed depending on if isoforms contain the beta domain or not, with the total expression of the beta domain-lacking isoforms vastly exceeding that of the beta domain-containing isoforms. Isoforms containing the beta domain are expressed primarily in skeletal and cardiac muscle and in brain. Also present in lung and testis. Splicing to include the beta domain is induced in differentiating myocytes. Isoforms lacking the beta domain are expressed less abundantly in skeletal muscle, brain and lymphocytes, and are uniquely found in ovary, liver, spleen and kidney. In embryos, the beta domain-containing and beta domain-lacking isoforms are equally expressed. Also expressed cerebellar granule neurons and other regions of the CNS. Highest levels in the olfactory bulb, cortex, hippocampus, thalamus and cerebellum.

The protein localises to the nucleus. Its function is as follows. Transcriptional activator which binds specifically to the MEF2 element, 5'-YTA[AT](4)TAR-3', found in numerous muscle-specific genes. Also involved in the activation of numerous growth factor- and stress-induced genes. Mediates cellular functions not only in skeletal and cardiac muscle development, but also in neuronal differentiation and survival. Plays diverse roles in the control of cell growth, survival and apoptosis via p38 MAPK signaling in muscle-specific and/or growth factor-related transcription. In cerebellar granule neurons, phosphorylated and sumoylated MEF2A represses transcription of NUR77 promoting synaptic differentiation. Associates with chromatin to the ZNF16 promoter. This is Myocyte-specific enhancer factor 2A (Mef2a) from Mus musculus (Mouse).